The chain runs to 890 residues: Translation initiation factor IF-2 (890 aa).

Residues 110-216 form a disordered region; it reads ISKPISKAPQ…KKPLIKTQDH (107 aa). Positions 135 to 148 are enriched in basic residues; the sequence is VPKRKGLVIIKKKR. Basic and acidic residues predominate over residues 184–199; the sequence is KSYNEPKNKENDDIKK. Residues 200–210 show a composition bias toward basic residues; the sequence is QKVKKEKKKPL. The tr-type G domain maps to 387–554; sequence TRPPVVTIMG…NILLQAEILE (168 aa). Residues 396 to 403 are G1; it reads GHVDHGKT. Residue 396–403 coordinates GTP; it reads GHVDHGKT. Positions 421–425 are G2; that stretch reads GITQH. Residues 442 to 445 form a G3 region; it reads DTPG. Residues 442–446 and 496–499 contribute to the GTP site; these read DTPGH and NKMD. Residues 496–499 are G4; it reads NKMD. A G5 region spans residues 532-534; the sequence is SAR.

This sequence belongs to the TRAFAC class translation factor GTPase superfamily. Classic translation factor GTPase family. IF-2 subfamily.

The protein resides in the cytoplasm. In terms of biological role, one of the essential components for the initiation of protein synthesis. Protects formylmethionyl-tRNA from spontaneous hydrolysis and promotes its binding to the 30S ribosomal subunits. Also involved in the hydrolysis of GTP during the formation of the 70S ribosomal complex. The sequence is that of Translation initiation factor IF-2 from Aliarcobacter butzleri (strain RM4018) (Arcobacter butzleri).